The primary structure comprises 228 residues: Sugar fermentation stimulation protein homolog (228 aa).

The protein belongs to the SfsA family.

This is Sugar fermentation stimulation protein homolog from Desulfitobacterium hafniense (strain Y51).